A 332-amino-acid chain; its full sequence is Glyceraldehyde-3-phosphate dehydrogenase 2 (332 aa).

NAD(+) is bound by residues 11-12 (RI), D32, and R77. D-glyceraldehyde 3-phosphate-binding positions include 148 to 150 (SCT), T179, 208 to 209 (TG), and R231. The active-site Nucleophile is the C149. N313 contributes to the NAD(+) binding site.

It belongs to the glyceraldehyde-3-phosphate dehydrogenase family. In terms of assembly, homotetramer.

The protein resides in the cytoplasm. The enzyme catalyses D-glyceraldehyde 3-phosphate + phosphate + NAD(+) = (2R)-3-phospho-glyceroyl phosphate + NADH + H(+). It participates in carbohydrate degradation; glycolysis; pyruvate from D-glyceraldehyde 3-phosphate: step 1/5. The protein is Glyceraldehyde-3-phosphate dehydrogenase 2 (Gapdh2) of Drosophila pseudoobscura pseudoobscura (Fruit fly).